A 342-amino-acid chain; its full sequence is Isopentenyl-diphosphate delta-isomerase (342 aa).

11–12 (RK) provides a ligand contact to substrate. Residues serine 68, 69 to 71 (SMT), serine 99, and asparagine 127 each bind FMN. Position 99 to 101 (99 to 101 (SMR)) interacts with substrate. A Mg(2+)-binding site is contributed by glutamate 163. FMN is bound by residues lysine 194, threonine 224, and 295-296 (AG).

The protein belongs to the IPP isomerase type 2 family. As to quaternary structure, homooctamer. Dimer of tetramers. The cofactor is FMN. It depends on NADPH as a cofactor. Mg(2+) is required as a cofactor.

It localises to the cytoplasm. The enzyme catalyses isopentenyl diphosphate = dimethylallyl diphosphate. In terms of biological role, involved in the biosynthesis of isoprenoids. Catalyzes the 1,3-allylic rearrangement of the homoallylic substrate isopentenyl (IPP) to its allylic isomer, dimethylallyl diphosphate (DMAPP). The polypeptide is Isopentenyl-diphosphate delta-isomerase (Rickettsia prowazekii (strain Madrid E)).